The primary structure comprises 221 residues: MKVHKESTGLLVSMATLFTGICLSLFYFLGASIVSYLVMIIAIFLYLLTINFFRCPKRHSPFANDDRAVVAPADGKIVAIEEVSENEILHERCIQVSIFMSIFNVHANWFPCEGKVTHVSHKNGHFIAAYLPKSSTDNERSAIVIKTEKGARILARQIAGALARRIVTYAEVGDICSVDAHMGFIKFGSRVDVYLPLGSQVEVKMDQKTVGNQTLIARLPE.

Catalysis depends on S189, which acts as the Schiff-base intermediate with substrate; via pyruvic acid. S189 is subject to Pyruvic acid (Ser); by autocatalysis.

The protein belongs to the phosphatidylserine decarboxylase family. PSD-A subfamily. In terms of assembly, heterodimer of a large membrane-associated beta subunit and a small pyruvoyl-containing alpha subunit. Pyruvate serves as cofactor. In terms of processing, is synthesized initially as an inactive proenzyme. Formation of the active enzyme involves a self-maturation process in which the active site pyruvoyl group is generated from an internal serine residue via an autocatalytic post-translational modification. Two non-identical subunits are generated from the proenzyme in this reaction, and the pyruvate is formed at the N-terminus of the alpha chain, which is derived from the carboxyl end of the proenzyme. The post-translation cleavage follows an unusual pathway, termed non-hydrolytic serinolysis, in which the side chain hydroxyl group of the serine supplies its oxygen atom to form the C-terminus of the beta chain, while the remainder of the serine residue undergoes an oxidative deamination to produce ammonia and the pyruvoyl prosthetic group on the alpha chain.

Its subcellular location is the cell membrane. It carries out the reaction a 1,2-diacyl-sn-glycero-3-phospho-L-serine + H(+) = a 1,2-diacyl-sn-glycero-3-phosphoethanolamine + CO2. It functions in the pathway phospholipid metabolism; phosphatidylethanolamine biosynthesis; phosphatidylethanolamine from CDP-diacylglycerol: step 2/2. In terms of biological role, catalyzes the formation of phosphatidylethanolamine (PtdEtn) from phosphatidylserine (PtdSer). In Porphyromonas gingivalis (strain ATCC 33277 / DSM 20709 / CIP 103683 / JCM 12257 / NCTC 11834 / 2561), this protein is Phosphatidylserine decarboxylase proenzyme.